The primary structure comprises 356 residues: Phospho-N-acetylmuramoyl-pentapeptide-transferase (356 aa).

The next 10 membrane-spanning stretches (helical) occupy residues threonine 25–alanine 45, glycine 70–tryptophan 90, leucine 93–phenylalanine 113, phenylalanine 138–leucine 158, tyrosine 164–glycine 184, glycine 195–cysteine 215, leucine 235–proline 255, alanine 258–valine 278, isoleucine 284–valine 304, and glutamine 333–leucine 353.

This sequence belongs to the glycosyltransferase 4 family. MraY subfamily. Mg(2+) is required as a cofactor.

The protein resides in the cell inner membrane. The catalysed reaction is UDP-N-acetyl-alpha-D-muramoyl-L-alanyl-gamma-D-glutamyl-meso-2,6-diaminopimeloyl-D-alanyl-D-alanine + di-trans,octa-cis-undecaprenyl phosphate = di-trans,octa-cis-undecaprenyl diphospho-N-acetyl-alpha-D-muramoyl-L-alanyl-D-glutamyl-meso-2,6-diaminopimeloyl-D-alanyl-D-alanine + UMP. It functions in the pathway cell wall biogenesis; peptidoglycan biosynthesis. In terms of biological role, catalyzes the initial step of the lipid cycle reactions in the biosynthesis of the cell wall peptidoglycan: transfers peptidoglycan precursor phospho-MurNAc-pentapeptide from UDP-MurNAc-pentapeptide onto the lipid carrier undecaprenyl phosphate, yielding undecaprenyl-pyrophosphoryl-MurNAc-pentapeptide, known as lipid I. This Bartonella tribocorum (strain CIP 105476 / IBS 506) protein is Phospho-N-acetylmuramoyl-pentapeptide-transferase.